A 317-amino-acid chain; its full sequence is DNA repair nuclease/redox regulator APEX1 (317 aa).

A disordered region spans residues 1–58 (MPKRGKKAAADDGEEPKSEPETKKSKGAAKKTEKEAAGEGPVLYEDPPDQKTSPSGKS). The segment at 2–32 (PKRGKKAAADDGEEPKSEPETKKSKGAAKKT) is necessary for interaction with YBX1, binding to RNA, association together with NPM1 to rRNA, endoribonuclease activity on abasic RNA and localization in the nucleoli. 2 positions are modified to N6-acetyllysine; by EP300: K6 and K7. Positions 8-12 (AAADD) match the Nuclear localization signal (NLS) motif. Basic and acidic residues predominate over residues 15 to 37 (EPKSEPETKKSKGAAKKTEKEAA). Position 18 is a phosphoserine (S18). The interval 22–32 (TKKSKGAAKKT) is necessary for interaction with NPM1 and for efficient rRNA binding. K26, K30, K31, and K34 each carry N6-acetyllysine. The residue at position 53 (S53) is a Phosphoserine. Residues 63–79 (ICSWNVDGLRAWIKKKG) carry the Nuclear export signal (NES) motif. C64 carries the S-nitrosocysteine; alternate modification. The cysteines at positions 64 and 92 are disulfide-linked. D69 provides a ligand contact to Mg(2+). An S-nitrosocysteine; alternate modification is found at C92. Residue E95 coordinates Mg(2+). Residue Y170 is part of the active site. Residue K196 is modified to N6-acetyllysine. Positions 209 and 211 each coordinate Mg(2+). The active-site Proton donor/acceptor is the D209. At T232 the chain carries Phosphothreonine; by CDK5. Residues 288-317 (HSLLPALCDSKIRSKALGSDHCPITLYLAL) form a mitochondrial targeting sequence (MTS) region. Position 307 (D307) interacts with Mg(2+). An S-nitrosocysteine modification is found at C309.

Belongs to the DNA repair enzymes AP/ExoA family. In terms of assembly, monomer. Homodimer; disulfide-linked. Component of the SET complex, composed of at least APEX1, SET, ANP32A, HMGB2, NME1 and TREX1. Associates with the dimer XRCC5/XRCC6 in a DNA-dependent manner. Interacts with SIRT1; the interaction is increased in the context of genotoxic stress. Interacts with HDAC1, HDAC2 and HDAC3; the interactions are not dependent on the APEX1 acetylation status. Interacts with XRCC1; the interaction is induced by SIRT1 and increased with the APEX1 acetylated form. Interacts with NPM1 (via N-terminal domain); the interaction is RNA-dependent and decreases in hydrogen peroxide-damaged cells. Interacts (via N-terminus) with YBX1 (via C-terminus); the interaction is increased in presence of APEX1 acetylated at Lys-6 and Lys-7. Interacts with HNRNPL; the interaction is DNA-dependent. Interacts (via N-terminus) with KPNA1 and KPNA2. Interacts with TXN; the interaction stimulates the FOS/JUN AP-1 complex DNA-binding activity in a redox-dependent manner. Interacts with GZMA, KRT8, MDM2, POLB, PRDX6, PRPF19, RPLP0, TOMM20 and WDR77. Binds to CDK5. Requires Mg(2+) as cofactor. Mn(2+) serves as cofactor. Post-translationally, phosphorylated. Phosphorylation by kinase PKC or casein kinase CK2 results in enhanced redox activity that stimulates binding of the FOS/JUN AP-1 complex to its cognate binding site. AP-endodeoxyribonuclease activity is not affected by CK2-mediated phosphorylation. Phosphorylation of Thr-232 by CDK5 in response to MPP(+)/MPTP (1-methyl-4-phenylpyridinium) reduces AP-endodeoxyribonuclease activity resulting in accumulation of DNA damage and contributing to neuronal death. Acetylated on Lys-6 and Lys-7. Acetylation is increased by the transcriptional coactivator EP300 acetyltransferase, genotoxic agents like H(2)O(2) and methyl methanesulfonate (MMS). Acetylation increases its binding affinity to the negative calcium response element (nCaRE) DNA promoter. The acetylated form induces a stronger binding of YBX1 to the Y-box sequence in the MDR1 promoter than the unacetylated form. Deacetylated on lysines. Lys-6 and Lys-7 are deacetylated by SIRT1. In terms of processing, cleaved at Lys-30 by granzyme A to create the mitochondrial form; leading in reduction of binding to DNA, AP endodeoxyribonuclease activity, redox activation of transcription factors and to enhanced cell death. Cleaved by granzyme K; leading to intracellular ROS accumulation and enhanced cell death after oxidative stress. Post-translationally, cys-64 and Cys-92 are nitrosylated in response to nitric oxide (NO) and lead to the exposure of the nuclear export signal (NES). Ubiquitinated by MDM2; leading to translocation to the cytoplasm and proteasomal degradation. Expressed in both resting and stimulated B cells stimulated to switch (at protein level).

The protein resides in the nucleus. The protein localises to the nucleolus. Its subcellular location is the nucleus speckle. It localises to the endoplasmic reticulum. It is found in the cytoplasm. The protein resides in the mitochondrion. It catalyses the reaction a deoxyribonucleotide-2'-deoxyribose-5'-monophosphate-DNA + H2O = a 5'-end 2'-deoxyribose-5'-monophosphate-DNA + a 3'-end 2'-deoxyribonucleotide-DNA + H(+). The enzyme catalyses Exonucleolytic cleavage in the 3'- to 5'-direction to yield nucleoside 5'-phosphates.. The catalysed reaction is a 3'-end 2'-deoxyribonucleotide-3'-phosphoglycolate-DNA + H2O = 2-phosphoglycolate + a 3'-end 2'-deoxyribonucleotide-DNA + H(+). It carries out the reaction a 3'-end 2'-deoxyribonucleotide-8-oxoguanine-DNA + H2O = 8-oxo-dGMP + a 3'-end 2'-deoxyribonucleotide-DNA + H(+). NPM1 stimulates endodeoxyribonuclease activity on double-stranded DNA with AP sites, but inhibits endoribonuclease activity on single-stranded RNA containing AP sites. In terms of biological role, multifunctional protein that plays a central role in the cellular response to oxidative stress. The two major activities of APEX1 are DNA repair and redox regulation of transcriptional factors. Functions as an apurinic/apyrimidinic (AP) endodeoxyribonuclease in the base excision repair (BER) pathway of DNA lesions induced by oxidative and alkylating agents. Initiates repair of AP sites in DNA by catalyzing hydrolytic incision of the phosphodiester backbone immediately adjacent to the damage, generating a single-strand break with 5'-deoxyribose phosphate and 3'-hydroxyl ends. Also incises at AP sites in the DNA strand of DNA/RNA hybrids, single-stranded DNA regions of R-loop structures, and single-stranded RNA molecules. Operates at switch sites of immunoglobulin (Ig) constant regions where it mediates Ig isotype class switch recombination. Processes AP sites induced by successive action of AICDA and UNG. Generates staggered nicks in opposite DNA strands resulting in the formation of double-strand DNA breaks that are finally resolved via non-homologous end joining repair pathway. Has 3'-5' exodeoxyribonuclease activity on mismatched deoxyribonucleotides at the 3' termini of nicked or gapped DNA molecules during short-patch BER. Possesses DNA 3' phosphodiesterase activity capable of removing lesions (such as phosphoglycolate and 8-oxoguanine) blocking the 3' side of DNA strand breaks. Also acts as an endoribonuclease involved in the control of single-stranded RNA metabolism. Plays a role in regulating MYC mRNA turnover by preferentially cleaving in between UA and CA dinucleotides of the MYC coding region determinant (CRD). In association with NMD1, plays a role in the rRNA quality control process during cell cycle progression. Acts as a loading factor for POLB onto non-incised AP sites in DNA and stimulates the 5'-terminal deoxyribose 5'-phosphate (dRp) excision activity of POLB. Exerts reversible nuclear redox activity to regulate DNA binding affinity and transcriptional activity of transcriptional factors by controlling the redox status of their DNA-binding domain, such as the FOS/JUN AP-1 complex after exposure to IR. Involved in calcium-dependent down-regulation of parathyroid hormone (PTH) expression by binding to negative calcium response elements (nCaREs). Together with HNRNPL or the dimer XRCC5/XRCC6, associates with nCaRE, acting as an activator of transcriptional repression. May also play a role in the epigenetic regulation of gene expression by participating in DNA demethylation. Stimulates the YBX1-mediated MDR1 promoter activity, when acetylated at Lys-6 and Lys-7, leading to drug resistance. Plays a role in protection from granzyme-mediated cellular repair leading to cell death. Binds DNA and RNA. Associates, together with YBX1, on the MDR1 promoter. Together with NPM1, associates with rRNA. This chain is DNA repair nuclease/redox regulator APEX1 (Apex1), found in Mus musculus (Mouse).